Here is a 445-residue protein sequence, read N- to C-terminus: Type II methyltransferase M.Bpa9945I (445 aa).

An SAM-dependent MTase C5-type domain is found at 1–444 (MIVIDLFSGA…RAVKDVINGH (444 aa)). Cys-136 is a catalytic residue.

The protein belongs to the class I-like SAM-binding methyltransferase superfamily. C5-methyltransferase family.

It localises to the cytoplasm. It carries out the reaction a 2'-deoxycytidine in DNA + S-adenosyl-L-methionine = a 5-methyl-2'-deoxycytidine in DNA + S-adenosyl-L-homocysteine + H(+). In terms of biological role, component of antiviral defense system DISARM (defense island system associated with restriction-modification), composed of DrmE, DrmA, DrmB, DrmC and DrmMII. DISARM is probably a multi-gene restriction module, this subunit is a DNA methylase. Expression of DISARM in B.subtilis (strain BEST7003) confers resistance to phages Nf, phi29, phi105, phi3T, SPO1, SPR and SPP1. Protection is over 10(7)-fold against phi3T, 10(4)-10(5)-fold against Nf, phi29, phi105 and SPR, 100-fold against SPO1 and 10-fold against SPP1. DISARM does not interfere with phage adsorption, but instead interferes with (phi3T) DNA replication early in its cycle, preventing replication, circularization and lysogeny and probably causes phage DNA degradation (DNA is degraded in SPP1-infected cells). Expression of this methylase alone leads to highly methylated phage, however they are still susceptible to the DISARM system. Its function is as follows. A methylase, recognizes the double-stranded sequence 5'-CCWGG-3', methylates C-2 on both strands. Phage Nf does not have any 5'-CCWGG-3' motifs but is still targeted by the DISARM system. The polypeptide is Type II methyltransferase M.Bpa9945I (Bacillus paralicheniformis (strain ATCC 9945a / NCIMB 11709 / CD-2)).